The sequence spans 550 residues: MLSDIEITHLAKLDHISKIGAKLGLGEDDMELYGKFKAKIEPRLDGSNSKLILVTATSPTPFGEGKTTMSIGLADALNRLVKKVCLALREPSLGPVFGIKGGAAGGGYSQLAPMEDLNLHFTGDFHAITSANNLISAMIDNSLYQENPLNIDKILWKRCMDMNDRALRFITVGQGGKADGVEREDGFNITAASEIMAILCLATSLADLKERIANIMVAYNDRGEPIYVRDLGCEDAVCILLKDAMKPNLFQTIEHTPTLVHGGPFANIAHGCNSIIATKTALNLADFVITEAGFGSELGAEKFIDIKCRVAGIAPDAVVLVSTIRSLKYNGGADKESITKPNMSALEVGIANLGGHIENLKQKFGLNVVVALNKFGFDEDSEIDFVRDYCAKFGVKMAVCENFVKGGEGALELANFVLEELKKPNDMKFAYETSDDTKSKITKIATEIYGAGEVVFEEAAQKALEKIKKLGLEKLPVCIAKTQYSFSDDAKLLGRAKGFKFSVKDLQIRTGAGFIVAVCGKIMLMPGLPKTPSALNMHIDTKTGEISGLA.

Residue 60 to 67 (TPFGEGKT) participates in ATP binding.

The protein belongs to the formate--tetrahydrofolate ligase family.

The catalysed reaction is (6S)-5,6,7,8-tetrahydrofolate + formate + ATP = (6R)-10-formyltetrahydrofolate + ADP + phosphate. Its pathway is one-carbon metabolism; tetrahydrofolate interconversion. This chain is Formate--tetrahydrofolate ligase, found in Campylobacter curvus (strain 525.92).